We begin with the raw amino-acid sequence, 227 residues long: tRNA pseudouridine synthase B (227 aa).

Residue aspartate 42 is the Nucleophile of the active site.

This sequence belongs to the pseudouridine synthase TruB family. Type 1 subfamily.

The enzyme catalyses uridine(55) in tRNA = pseudouridine(55) in tRNA. Responsible for synthesis of pseudouridine from uracil-55 in the psi GC loop of transfer RNAs. The sequence is that of tRNA pseudouridine synthase B from Ureaplasma parvum serovar 3 (strain ATCC 27815 / 27 / NCTC 11736).